A 336-amino-acid polypeptide reads, in one-letter code: MAMSDRLLAAWYHGHPALTLLRPLEWLYRRVVAGKRQRFLDGEGEIYQSPVPVIVVGNITVGGTGKTPMILWLIEHCRRHGLRVGVVSRGYGAKPAQLPWRVQADQTADIAGDEPLLIVQRTGVPLMIDPDRSAAVRALLDSEPLDLILSDDGMQHYRLARDLELVLIDAARGLGNRRCLPAGPLREPAERLQSVDGVLFNGALEDRDGGFAFRLKPSALVNLRSGERRPLDHFPPGQAVHAVAGIGNPQRFFNTLEALDWRPVPHAFADHAEYSVQALSFTPSLPVVMTEKDAVKCRAFAADDWWYLTVDAVPSPAFVAWFDTQLMRLLPDRLLP.

60 to 67 lines the ATP pocket; it reads TVGGTGKT.

It belongs to the LpxK family.

It carries out the reaction a lipid A disaccharide + ATP = a lipid IVA + ADP + H(+). The protein operates within glycolipid biosynthesis; lipid IV(A) biosynthesis; lipid IV(A) from (3R)-3-hydroxytetradecanoyl-[acyl-carrier-protein] and UDP-N-acetyl-alpha-D-glucosamine: step 6/6. In terms of biological role, transfers the gamma-phosphate of ATP to the 4'-position of a tetraacyldisaccharide 1-phosphate intermediate (termed DS-1-P) to form tetraacyldisaccharide 1,4'-bis-phosphate (lipid IVA). The polypeptide is Tetraacyldisaccharide 4'-kinase (Pseudomonas fluorescens (strain Pf0-1)).